Reading from the N-terminus, the 865-residue chain is MQNGANSRSQEYQGVSVDSRYDPQAIETKWQQSWAAAQLDRTPEADDRPKFYALSMFPYPSGNLHMGHVRNYTITDAIARVKRRQGFRVLHPMGWDAFGLPAENAAIDRGVQPADWTYQNVAQMREQLKQLGLSYDWDREVTTCSPDYYRWTQWLFLQFFEAGLAYQKEATVNWDPIDQTVLANEQVDSEGRSWRSGAKVERRQLKQWFLKITDYAEELLQDLDQLTGWPERVRLMQANWIGKSTGAYLEFPIVNSSDRVKVFTTRPDTVYGVSYVVLAPEHPLVTQVTTPEQQTAVAAFAAEVSQTSELERTAEDRPKRGVPTGGFVTNPFTGQAVPIWIADYVLVEYGTGAVMGVPAHDSRDFAFAQRYGLPVQPVIQPTEGAIAEPWPAPFTEAGVMVNSGQFDGLSSTEAKAKIIAFAEEQGWGQAHVQYRLRDWLISRQRYWGCPIPIVHCPDCGPVAAADLPVQLPDSVQFSGRGPSPLAQLEDWVTTTCPSCGKPARRETDTMDTFMCSSWYYLRYSDASNPEIAFTKDKVNDWLPVDQYVGGIEHAILHLLYSRFFTKVLRDRGLLSFDEPFKRLLTQGMVQGLTYKNPKTGKYVPSDRISDPSQPVDPDTGDRLEVFFEKMSKSKYNGVDPARVLDRYGADTARMFILFKAPPEKDLEWDDADVEGQFRFLNRVWRLVQTASQVEATTAADDKAEKDLRRAVHTAIQAVTEDLEEDYQLNTAIAELMKLTNALNDAPMPGSPAYLEGVQTLVLLLAPFAPHIAEELWQQLGGERSVHLEGWPVLDESALIVDEIPLVIQIMGKTRGTITVPASADRDQLQQLAENSEIAQRWLDGQTIRKVIVVPGKLVNFVIASP.

A 'HIGH' region motif is present at residues 58–68; sequence PYPSGNLHMGH. A 'KMSKS' region motif is present at residues 629–633; that stretch reads KMSKS. An ATP-binding site is contributed by lysine 632.

Belongs to the class-I aminoacyl-tRNA synthetase family.

The protein resides in the cytoplasm. It catalyses the reaction tRNA(Leu) + L-leucine + ATP = L-leucyl-tRNA(Leu) + AMP + diphosphate. The polypeptide is Leucine--tRNA ligase (Synechococcus elongatus (strain ATCC 33912 / PCC 7942 / FACHB-805) (Anacystis nidulans R2)).